A 638-amino-acid chain; its full sequence is 1-deoxy-D-xylulose-5-phosphate synthase (638 aa).

Thiamine diphosphate contacts are provided by residues His79 and 120 to 122 (AHS). Residue Asp151 participates in Mg(2+) binding. Thiamine diphosphate is bound by residues 152-153 (GA), Asn180, Tyr289, and Glu371. Asn180 provides a ligand contact to Mg(2+).

This sequence belongs to the transketolase family. DXPS subfamily. In terms of assembly, homodimer. It depends on Mg(2+) as a cofactor. Thiamine diphosphate serves as cofactor.

The enzyme catalyses D-glyceraldehyde 3-phosphate + pyruvate + H(+) = 1-deoxy-D-xylulose 5-phosphate + CO2. It functions in the pathway metabolic intermediate biosynthesis; 1-deoxy-D-xylulose 5-phosphate biosynthesis; 1-deoxy-D-xylulose 5-phosphate from D-glyceraldehyde 3-phosphate and pyruvate: step 1/1. Functionally, catalyzes the acyloin condensation reaction between C atoms 2 and 3 of pyruvate and glyceraldehyde 3-phosphate to yield 1-deoxy-D-xylulose-5-phosphate (DXP). The sequence is that of 1-deoxy-D-xylulose-5-phosphate synthase from Rhizobium leguminosarum bv. trifolii (strain WSM2304).